A 217-amino-acid polypeptide reads, in one-letter code: Growth hormone variant (217 aa).

The first 26 residues, 1-26 (MAAGSRTSLLLAFGLLCLSWLQEGSA), serve as a signal peptide directing secretion. Intrachain disulfides connect Cys-79–Cys-191 and Cys-208–Cys-215. The residue at position 132 (Ser-132) is a Phosphoserine. N-linked (GlcNAc...) asparagine glycosylation occurs at Asn-166. Phosphoserine is present on Ser-176.

It belongs to the somatotropin/prolactin family. Monomer, dimer, trimer, tetramer and pentamer, disulfide-linked or non-covalently associated, in homomeric and heteromeric combinations. Can also form a complex either with GHBP or with the alpha2-macroglobulin complex. In terms of tissue distribution, expressed in the placenta.

It is found in the secreted. In terms of biological role, plays an important role in growth control. Its major role in stimulating body growth is to stimulate the liver and other tissues to secrete IGF1. It stimulates both the differentiation and proliferation of myoblasts. It also stimulates amino acid uptake and protein synthesis in muscle and other tissues. This Homo sapiens (Human) protein is Growth hormone variant (GH2).